The sequence spans 153 residues: Arginine repressor (153 aa).

The protein belongs to the ArgR family.

The protein localises to the cytoplasm. It functions in the pathway amino-acid biosynthesis; L-arginine biosynthesis [regulation]. Regulates arginine biosynthesis genes. This Actinobacillus pleuropneumoniae serotype 3 (strain JL03) protein is Arginine repressor.